The following is a 429-amino-acid chain: Serine hydroxymethyltransferase (429 aa).

(6S)-5,6,7,8-tetrahydrofolate contacts are provided by residues Leu126 and 130 to 132; that span reads GHL. Lys235 carries the post-translational modification N6-(pyridoxal phosphate)lysine. 359 to 361 is a (6S)-5,6,7,8-tetrahydrofolate binding site; the sequence is SPF.

It belongs to the SHMT family. In terms of assembly, homodimer. It depends on pyridoxal 5'-phosphate as a cofactor.

It localises to the cytoplasm. It catalyses the reaction (6R)-5,10-methylene-5,6,7,8-tetrahydrofolate + glycine + H2O = (6S)-5,6,7,8-tetrahydrofolate + L-serine. It participates in one-carbon metabolism; tetrahydrofolate interconversion. It functions in the pathway amino-acid biosynthesis; glycine biosynthesis; glycine from L-serine: step 1/1. Catalyzes the reversible interconversion of serine and glycine with tetrahydrofolate (THF) serving as the one-carbon carrier. This reaction serves as the major source of one-carbon groups required for the biosynthesis of purines, thymidylate, methionine, and other important biomolecules. Also exhibits THF-independent aldolase activity toward beta-hydroxyamino acids, producing glycine and aldehydes, via a retro-aldol mechanism. This is Serine hydroxymethyltransferase from Synechococcus sp. (strain CC9902).